We begin with the raw amino-acid sequence, 265 residues long: MKKVTTSTLLKMKQQSEKISALTAYDASFSKLFDEQGIDVLLIGDSLGMVLQGCDDTLGVSIDDVAYHTRAVRKGVERAFVIADMPFMSYSTPEQTYLNAAKLMAAGASMVKLEGGRWLLESIQGLNERGVPVCGHLGLTPQSVHVFGGFKVQGRDDLQAEQMLEQAKEMAAAGIQLLVLECVPTELAGAISQAVDIPVIGIGAGPETDGQILVMHDMFGISANYMPKFSKNYLQETGDMRTAVSQYIEEVKDGSFPSEAHSFSK.

Positions 45 and 84 each coordinate Mg(2+). 3-methyl-2-oxobutanoate contacts are provided by residues Asp45 to Ser46, Asp84, and Lys112. Glu114 contributes to the Mg(2+) binding site. The active-site Proton acceptor is Glu181.

Belongs to the PanB family. Homodecamer; pentamer of dimers. The cofactor is Mg(2+).

The protein localises to the cytoplasm. The catalysed reaction is 3-methyl-2-oxobutanoate + (6R)-5,10-methylene-5,6,7,8-tetrahydrofolate + H2O = 2-dehydropantoate + (6S)-5,6,7,8-tetrahydrofolate. The protein operates within cofactor biosynthesis; (R)-pantothenate biosynthesis; (R)-pantoate from 3-methyl-2-oxobutanoate: step 1/2. Catalyzes the reversible reaction in which hydroxymethyl group from 5,10-methylenetetrahydrofolate is transferred onto alpha-ketoisovalerate to form ketopantoate. In Pseudoalteromonas atlantica (strain T6c / ATCC BAA-1087), this protein is 3-methyl-2-oxobutanoate hydroxymethyltransferase.